A 209-amino-acid chain; its full sequence is Ubiquitin-conjugating enzyme E2 S (209 aa).

The UBC core domain occupies 14–160 (QTIRQVMREL…ARMMTEIHAQ (147 aa)). Cysteine 98 serves as the catalytic Glycyl thioester intermediate. Residues 168-194 (AVGDAKDDGGPSTKKHAGLDKKLQDKK) are disordered. Basic and acidic residues predominate over residues 184-194 (AGLDKKLQDKK).

The protein belongs to the ubiquitin-conjugating enzyme family.

The enzyme catalyses S-ubiquitinyl-[E1 ubiquitin-activating enzyme]-L-cysteine + [E2 ubiquitin-conjugating enzyme]-L-cysteine = [E1 ubiquitin-activating enzyme]-L-cysteine + S-ubiquitinyl-[E2 ubiquitin-conjugating enzyme]-L-cysteine.. Its pathway is protein modification; protein ubiquitination. Its function is as follows. Catalyzes the covalent attachment of ubiquitin to other proteins. Acts as an essential factor of the anaphase promoting complex/cyclosome (APC/C), a cell cycle-regulated ubiquitin ligase that controls progression through mitosis. Acts by specifically elongating polyubiquitin chains initiated by the E2 enzyme vih/UbcH10 on APC/C substrates, enhancing the degradation of APC/C substrates by the proteasome and promoting mitotic exit. The chain is Ubiquitin-conjugating enzyme E2 S from Drosophila melanogaster (Fruit fly).